The primary structure comprises 124 residues: MVKEFKEFISRGNMMDLAVGVIIGAAFTAIVNSLVKDLINPLIGLFIGKIDLSNLKFTIGEATFKYGSFLNAVINFLIIALVVFFLIKLVNKITPKKEVEEDPAPTNEEIYLRQIRDLLQEKNK.

2 helical membrane-spanning segments follow: residues Met15–Val35 and Gly67–Ile87.

It belongs to the MscL family. As to quaternary structure, homopentamer.

Its subcellular location is the cell membrane. In terms of biological role, channel that opens in response to stretch forces in the membrane lipid bilayer. May participate in the regulation of osmotic pressure changes within the cell. The polypeptide is Large-conductance mechanosensitive channel (Lactobacillus johnsonii (strain CNCM I-12250 / La1 / NCC 533)).